The chain runs to 162 residues: Phosphopantetheine adenylyltransferase (162 aa).

T14 contacts substrate. Residues 14–15 (TF) and H22 contribute to the ATP site. Substrate is bound by residues K46, L78, and R92. ATP is bound by residues 93-95 (GLR), E103, and 128-134 (HSFISSS).

The protein belongs to the bacterial CoaD family. In terms of assembly, homohexamer. The cofactor is Mg(2+).

The protein localises to the cytoplasm. It carries out the reaction (R)-4'-phosphopantetheine + ATP + H(+) = 3'-dephospho-CoA + diphosphate. The protein operates within cofactor biosynthesis; coenzyme A biosynthesis; CoA from (R)-pantothenate: step 4/5. Its function is as follows. Reversibly transfers an adenylyl group from ATP to 4'-phosphopantetheine, yielding dephospho-CoA (dPCoA) and pyrophosphate. The polypeptide is Phosphopantetheine adenylyltransferase (Xylella fastidiosa (strain 9a5c)).